We begin with the raw amino-acid sequence, 498 residues long: UDP-N-acetylmuramate--L-alanine ligase (498 aa).

Position 133-139 (133-139 (GSSGKTT)) interacts with ATP.

It belongs to the MurCDEF family.

The protein localises to the cytoplasm. The enzyme catalyses UDP-N-acetyl-alpha-D-muramate + L-alanine + ATP = UDP-N-acetyl-alpha-D-muramoyl-L-alanine + ADP + phosphate + H(+). It participates in cell wall biogenesis; peptidoglycan biosynthesis. Functionally, cell wall formation. The chain is UDP-N-acetylmuramate--L-alanine ligase from Wolbachia pipientis wMel.